Reading from the N-terminus, the 287-residue chain is MRFIHALLLAGIAHSAYASEKLTFKTDLEKLEREKAAQIGVAIVDPQGEIVAGHRMAQRFAMCSTFKFPLAALVFERIDSGTERGDRKLSYGPDMIVEWSPATERFLASGHMTVLEAAQAAVQLSDNGATNLLLREIGGPAAMTQYFRKIGDSVSRLDRKEPEMGDNTPGDLRDTTTPIAMARTVAKVLYGGALTSTSTHTIERWLIGNQTGDATLRAGFPKDWVVGEKTGTCANGGRNDIGFFKAQERDYAVAVYTTAPKLSAVERDELVASVGQVITQLILSTDK.

Residues Met-1–Ala-18 form the signal peptide. A disulfide bond links Cys-63 and Cys-233. The Nucleophile; acyl-ester intermediate role is filled by Ser-64. Residues Lys-67, Ser-125, Glu-161, and Thr-232 each contribute to the a beta-lactam site.

It belongs to the class-A beta-lactamase family. In terms of assembly, monomer. May form dimers.

It carries out the reaction a beta-lactam + H2O = a substituted beta-amino acid. Inhibited by the beta-lactamase-blocking agents clavulanic acid, tazobactam, sulbactam and tazobactam and the carbapenem, imipenem. Inhibition by imipenem may involve Gly-165. Its function is as follows. Extended-spectrum beta-lactamase (ESBL) which confers resistance to penicillins, as well as first, second, third and fourth-generation cephalosporins. Has ceftazidime-hydrolyzing activity. Inactive against the carbapenems, imipenem, meropenem, ertapenem and doripenem. However, weak hydrolytic activity with respect to imipenem has also been reported. The polypeptide is Beta-lactamase GES-1 (Klebsiella pneumoniae).